The primary structure comprises 404 residues: Cysteine desulfurase IscS (404 aa).

Pyridoxal 5'-phosphate-binding positions include 75–76, asparagine 155, glutamine 183, and 203–205; these read AT and SGH. An N6-(pyridoxal phosphate)lysine modification is found at lysine 206. Position 243 (threonine 243) interacts with pyridoxal 5'-phosphate. The active-site Cysteine persulfide intermediate is cysteine 328. Position 328 (cysteine 328) interacts with [2Fe-2S] cluster.

It belongs to the class-V pyridoxal-phosphate-dependent aminotransferase family. NifS/IscS subfamily. In terms of assembly, homodimer. Forms a heterotetramer with IscU, interacts with other sulfur acceptors. Pyridoxal 5'-phosphate is required as a cofactor.

The protein localises to the cytoplasm. The catalysed reaction is (sulfur carrier)-H + L-cysteine = (sulfur carrier)-SH + L-alanine. It functions in the pathway cofactor biosynthesis; iron-sulfur cluster biosynthesis. In terms of biological role, master enzyme that delivers sulfur to a number of partners involved in Fe-S cluster assembly, tRNA modification or cofactor biosynthesis. Catalyzes the removal of elemental sulfur atoms from cysteine to produce alanine. Functions as a sulfur delivery protein for Fe-S cluster synthesis onto IscU, an Fe-S scaffold assembly protein, as well as other S acceptor proteins. The polypeptide is Cysteine desulfurase IscS (Shewanella baltica (strain OS185)).